A 179-amino-acid chain; its full sequence is Probable mitochondrial import inner membrane translocase subunit Tim17 1 (179 aa).

3 helical membrane-spanning segments follow: residues 17–37 (CGGA…IKGF), 61–81 (LVGG…CSLV), and 113–133 (LSSA…GIVV).

The protein belongs to the Tim17/Tim22/Tim23 family. Component of the TIM23 complex at least composed of Tim23, Tim17 (Tim17a1, Tim17a2 or Tim17b1) and a Tim50. The complex interacts with the Tim44 component of the PAM complex.

The protein resides in the mitochondrion inner membrane. In terms of biological role, essential component of the TIM23 complex, a complex that mediates the translocation of transit peptide-containing proteins across the mitochondrial inner membrane. The chain is Probable mitochondrial import inner membrane translocase subunit Tim17 1 (Tim17b1) from Drosophila melanogaster (Fruit fly).